We begin with the raw amino-acid sequence, 283 residues long: Pantothenate synthetase (283 aa).

26–33 (MGNLHEGH) lines the ATP pocket. The Proton donor role is filled by histidine 33. Glutamine 57 contributes to the (R)-pantoate binding site. Glutamine 57 lines the beta-alanine pocket. Residue 144–147 (GKKD) participates in ATP binding. Glutamine 150 provides a ligand contact to (R)-pantoate. ATP contacts are provided by residues isoleucine 173 and 181–184 (LSSR).

This sequence belongs to the pantothenate synthetase family. As to quaternary structure, homodimer.

Its subcellular location is the cytoplasm. It carries out the reaction (R)-pantoate + beta-alanine + ATP = (R)-pantothenate + AMP + diphosphate + H(+). It functions in the pathway cofactor biosynthesis; (R)-pantothenate biosynthesis; (R)-pantothenate from (R)-pantoate and beta-alanine: step 1/1. Functionally, catalyzes the condensation of pantoate with beta-alanine in an ATP-dependent reaction via a pantoyl-adenylate intermediate. The sequence is that of Pantothenate synthetase from Polynucleobacter necessarius subsp. necessarius (strain STIR1).